Here is a 381-residue protein sequence, read N- to C-terminus: Probable tRNA sulfurtransferase (381 aa).

Residues D68–K176 form the THUMP domain. ATP-binding positions include L194–I195, K276, G298, and Q307.

The protein belongs to the ThiI family.

It localises to the cytoplasm. It catalyses the reaction [ThiI sulfur-carrier protein]-S-sulfanyl-L-cysteine + a uridine in tRNA + 2 reduced [2Fe-2S]-[ferredoxin] + ATP + H(+) = [ThiI sulfur-carrier protein]-L-cysteine + a 4-thiouridine in tRNA + 2 oxidized [2Fe-2S]-[ferredoxin] + AMP + diphosphate. The enzyme catalyses [ThiS sulfur-carrier protein]-C-terminal Gly-Gly-AMP + S-sulfanyl-L-cysteinyl-[cysteine desulfurase] + AH2 = [ThiS sulfur-carrier protein]-C-terminal-Gly-aminoethanethioate + L-cysteinyl-[cysteine desulfurase] + A + AMP + 2 H(+). Its pathway is cofactor biosynthesis; thiamine diphosphate biosynthesis. Functionally, catalyzes the ATP-dependent transfer of a sulfur to tRNA to produce 4-thiouridine in position 8 of tRNAs, which functions as a near-UV photosensor. Also catalyzes the transfer of sulfur to the sulfur carrier protein ThiS, forming ThiS-thiocarboxylate. This is a step in the synthesis of thiazole, in the thiamine biosynthesis pathway. The sulfur is donated as persulfide by IscS. The chain is Probable tRNA sulfurtransferase from Methanocaldococcus jannaschii (strain ATCC 43067 / DSM 2661 / JAL-1 / JCM 10045 / NBRC 100440) (Methanococcus jannaschii).